A 156-amino-acid polypeptide reads, in one-letter code: 6,7-dimethyl-8-ribityllumazine synthase (156 aa).

Residues F22, A57–E59, and S81–I83 contribute to the 5-amino-6-(D-ribitylamino)uracil site. A (2S)-2-hydroxy-3-oxobutyl phosphate-binding site is contributed by G86–T87. Residue H89 is the Proton donor of the active site. 5-amino-6-(D-ribitylamino)uracil is bound at residue F114. R128 serves as a coordination point for (2S)-2-hydroxy-3-oxobutyl phosphate.

It belongs to the DMRL synthase family. As to quaternary structure, forms an icosahedral capsid composed of 60 subunits, arranged as a dodecamer of pentamers.

It catalyses the reaction (2S)-2-hydroxy-3-oxobutyl phosphate + 5-amino-6-(D-ribitylamino)uracil = 6,7-dimethyl-8-(1-D-ribityl)lumazine + phosphate + 2 H2O + H(+). Its pathway is cofactor biosynthesis; riboflavin biosynthesis; riboflavin from 2-hydroxy-3-oxobutyl phosphate and 5-amino-6-(D-ribitylamino)uracil: step 1/2. Catalyzes the formation of 6,7-dimethyl-8-ribityllumazine by condensation of 5-amino-6-(D-ribitylamino)uracil with 3,4-dihydroxy-2-butanone 4-phosphate. This is the penultimate step in the biosynthesis of riboflavin. In Aliivibrio fischeri (strain ATCC 700601 / ES114) (Vibrio fischeri), this protein is 6,7-dimethyl-8-ribityllumazine synthase.